Consider the following 251-residue polypeptide: Ribosomal RNA small subunit methyltransferase G (251 aa).

S-adenosyl-L-methionine is bound by residues Gly-74, Phe-79, 125-126 (AE), and Arg-144. Residues 224–251 (RPAGLPTQHPLGAIEGAPRVESEEPEEP) are disordered.

Belongs to the methyltransferase superfamily. RNA methyltransferase RsmG family.

It is found in the cytoplasm. Its function is as follows. Specifically methylates the N7 position of a guanine in 16S rRNA. This Gloeobacter violaceus (strain ATCC 29082 / PCC 7421) protein is Ribosomal RNA small subunit methyltransferase G.